Reading from the N-terminus, the 273-residue chain is 3-keto-5-aminohexanoate cleavage enzyme (273 aa).

E14 provides a ligand contact to (5S)-5-amino-3-oxohexanoate. The Zn(2+) site is built by H46 and H48. (5S)-5-amino-3-oxohexanoate is bound by residues S82, G85, and S106. Residue E227 coordinates Zn(2+).

It belongs to the BKACE family. Kce subfamily. In terms of assembly, homotetramer. It depends on Zn(2+) as a cofactor.

The enzyme catalyses (5S)-5-amino-3-oxohexanoate + acetyl-CoA = (3S)-3-aminobutanoyl-CoA + acetoacetate. Its pathway is amino-acid degradation; L-lysine degradation via acetate pathway. Involved in the anaerobic fermentation of lysine. Catalyzes the reversible reaction between 3-keto-5-aminohexanoate (KAH) and acetyl-CoA to form 3-aminobutyryl-CoA and acetoacetate. The reaction involves the deprotonation of KAH, the nucleophilic addition onto acetyl-CoA and the intramolecular transfer of the CoA moiety. The protein is 3-keto-5-aminohexanoate cleavage enzyme of Acetoanaerobium sticklandii (strain ATCC 12662 / DSM 519 / JCM 1433 / CCUG 9281 / NCIMB 10654 / HF) (Clostridium sticklandii).